The following is a 681-amino-acid chain: Chaperone protein htpG (681 aa).

Positions 1-326 (MQKGNIGVTT…SPDIPLNVSR (326 aa)) are a; substrate-binding. The segment at 327–545 (SYLQSDSNVK…YMRRMKEMAN (219 aa)) is b. The segment at 546–681 (IQAGMSFYGE…NFVKRSIELI (136 aa)) is c.

The protein belongs to the heat shock protein 90 family. As to quaternary structure, homodimer.

Its subcellular location is the cytoplasm. Its function is as follows. Molecular chaperone. Has ATPase activity. The chain is Chaperone protein htpG from Bacteroides fragilis (strain YCH46).